A 243-amino-acid chain; its full sequence is Ras-related protein Rab-12 (243 aa).

An N-acetylmethionine modification is found at Met1. The interval 1-36 (MDPSAALHRRPAGGSLGAVSPALSGGQARRRKQPPR) is disordered. A phosphoserine mark is found at Ser15, Ser20, and Ser24. Gly51, Val52, Gly53, Lys54, Thr55, Ser72, and Thr73 together coordinate GTP. Position 55 (Thr55) interacts with Mg(2+). 2 short sequence motifs (switch) span residues 64–78 (DTFC…GVDF) and 96–113 (DTAG…YYRS). Positions 73 and 96 each coordinate Mg(2+). Gly99 contacts GTP. Ser105 is subject to Phosphoserine; by LRRK2. Residues Asn154, Lys155, Asp157, Ser185, Ala186, and Lys187 each contribute to the GTP site. Residues Cys242 and Cys243 are each lipidated (S-geranylgeranyl cysteine).

Belongs to the small GTPase superfamily. Rab family. As to quaternary structure, interacts with RABIF and OPTN. Interacts with LRRK2; interaction facilitates phosphorylation of Ser-105. Interacts with GDI1, GDI2, CHM and CHML; these interactions are disrupted by phosphorylation on Ser-105. Interacts with RILPL1 and RILPL2; these interactions are dependent on phosphorylation of Ser-105. The cofactor is Mg(2+). In terms of processing, phosphorylation of Ser-105 in the switch II region by LRRK2 prevents the association of RAB regulatory proteins, including CHM, CHML and RAB GDP dissociation inhibitors GDI1 and GDI2. As to expression, ubiquitously expressed.

The protein localises to the recycling endosome membrane. Its subcellular location is the lysosome membrane. It is found in the golgi apparatus membrane. It localises to the cytoplasmic vesicle. The protein resides in the autophagosome. It carries out the reaction GTP + H2O = GDP + phosphate + H(+). Regulated by guanine nucleotide exchange factors (GEFs) including DENND3 which promote the exchange of bound GDP for free GTP. Regulated by GTPase activating proteins (GAPs) which increase the GTP hydrolysis activity. Inhibited by GDP dissociation inhibitors (GDIs). Functionally, the small GTPases Rab are key regulators of intracellular membrane trafficking, from the formation of transport vesicles to their fusion with membranes. Rabs cycle between an inactive GDP-bound form and an active GTP-bound form that is able to recruit to membranes different set of downstream effectors directly responsible for vesicle formation, movement, tethering and fusion. RAB12 may play a role in protein transport from recycling endosomes to lysosomes regulating, for instance, the degradation of the transferrin receptor. Involved in autophagy. This Mus musculus (Mouse) protein is Ras-related protein Rab-12.